The primary structure comprises 211 residues: NADH-quinone oxidoreductase subunit I 1 (211 aa).

4Fe-4S ferredoxin-type domains are found at residues leucine 50–alanine 80 and arginine 96–glutamate 125. Cysteine 60, cysteine 63, cysteine 66, cysteine 70, cysteine 105, cysteine 108, cysteine 111, and cysteine 115 together coordinate [4Fe-4S] cluster. Residues glutamine 192–arginine 211 form a disordered region.

It belongs to the complex I 23 kDa subunit family. NDH-1 is composed of 14 different subunits. Subunits NuoA, H, J, K, L, M, N constitute the membrane sector of the complex. The cofactor is [4Fe-4S] cluster.

The protein localises to the cell membrane. It carries out the reaction a quinone + NADH + 5 H(+)(in) = a quinol + NAD(+) + 4 H(+)(out). Functionally, NDH-1 shuttles electrons from NADH, via FMN and iron-sulfur (Fe-S) centers, to quinones in the respiratory chain. The immediate electron acceptor for the enzyme in this species is believed to be ubiquinone. Couples the redox reaction to proton translocation (for every two electrons transferred, four hydrogen ions are translocated across the cytoplasmic membrane), and thus conserves the redox energy in a proton gradient. The protein is NADH-quinone oxidoreductase subunit I 1 of Streptomyces coelicolor (strain ATCC BAA-471 / A3(2) / M145).